Here is a 394-residue protein sequence, read N- to C-terminus: Flavohemoprotein (394 aa).

The region spanning 1–138 is the Globin domain; it reads MLTQEHINII…LAQVFIDREG (138 aa). Histidine 85 serves as a coordination point for heme b. Active-site charge relay system residues include tyrosine 95 and glutamate 137. The reductase stretch occupies residues 149–394; sequence GGWRDGRTFV…VFGPHAQLAA (246 aa). The region spanning 152-262 is the FAD-binding FR-type domain; sequence RDGRTFVVRE…YAPAGDFFYV (111 aa). Residues tyrosine 190 and 206-209 each bind FAD; that span reads RQYS. 274–279 lines the NADP(+) pocket; the sequence is GVGATP. 385–388 is a binding site for FAD; the sequence is VFGP.

It belongs to the globin family. Two-domain flavohemoproteins subfamily. This sequence in the C-terminal section; belongs to the flavoprotein pyridine nucleotide cytochrome reductase family. The cofactor is heme b. FAD serves as cofactor.

The catalysed reaction is 2 nitric oxide + NADPH + 2 O2 = 2 nitrate + NADP(+) + H(+). The enzyme catalyses 2 nitric oxide + NADH + 2 O2 = 2 nitrate + NAD(+) + H(+). Is involved in NO detoxification in an aerobic process, termed nitric oxide dioxygenase (NOD) reaction that utilizes O(2) and NAD(P)H to convert NO to nitrate, which protects the bacterium from various noxious nitrogen compounds. Therefore, plays a central role in the inducible response to nitrosative stress. This Vibrio cholerae serotype O1 (strain ATCC 39315 / El Tor Inaba N16961) protein is Flavohemoprotein (hmp).